Consider the following 355-residue polypeptide: Membrane cofactor protein (355 aa).

Positions 1–42 (MTAAPLTPDPTHPRRRRKSYTFFSLGIYAEALLFLLSSLSDA) are cleaved as a signal peptide. Sushi domains lie at 43-104 (CEPP…GCIK), 105-168 (VQCT…SCKK), 169-234 (VYCL…ECKV), and 235-294 (VKCP…QCLK). Residues 43–326 (CEPPPPFEAM…GIFGQEFDAW (284 aa)) are Extracellular-facing. Intrachain disulfides connect cysteine 107-cysteine 149, cysteine 135-cysteine 166, cysteine 171-cysteine 219, cysteine 200-cysteine 232, cysteine 237-cysteine 279, and cysteine 265-cysteine 292. Asparagine 179 is a glycosylation site (N-linked (GlcNAc...) asparagine). A glycan (O-linked (GalNAc...) threonine) is linked at threonine 301. Residues 327–347 (IIALIVVTSVVGVIVICLIIL) form a helical membrane-spanning segment. Residues 348 to 355 (RCSEYRKK) lie on the Cytoplasmic side of the membrane.

As to quaternary structure, interacts with C3b. Interacts with C4b. Interacts with moesin/MSN. O-glycosylated. Post-translationally, N-glycosylated. As to expression, specifically expressed in testis. Within testis, present only in elongated spermatids and spermatozoa (at protein level).

The protein resides in the cytoplasmic vesicle. The protein localises to the secretory vesicle. Its subcellular location is the acrosome inner membrane. Its function is as follows. May be involved in the fusion of the spermatozoa with the oocyte during fertilization. In Rattus norvegicus (Rat), this protein is Membrane cofactor protein (Cd46).